The chain runs to 362 residues: tRNA-specific 2-thiouridylase MnmA 3 (362 aa).

ATP-binding positions include 11–18 (GMSGGIDS) and Met-37. Cys-91 (nucleophile) is an active-site residue. Cys-91 and Cys-188 are joined by a disulfide. ATP is bound at residue Gly-115. Residues 137–139 (KDQ) form an interaction with tRNA region. Cys-188 acts as the Cysteine persulfide intermediate in catalysis. The interval 296 to 297 (RY) is interaction with tRNA.

The protein belongs to the MnmA/TRMU family.

Its subcellular location is the cytoplasm. It carries out the reaction S-sulfanyl-L-cysteinyl-[protein] + uridine(34) in tRNA + AH2 + ATP = 2-thiouridine(34) in tRNA + L-cysteinyl-[protein] + A + AMP + diphosphate + H(+). Catalyzes the 2-thiolation of uridine at the wobble position (U34) of tRNA, leading to the formation of s(2)U34. This is tRNA-specific 2-thiouridylase MnmA 3 from Bacteroides fragilis (strain ATCC 25285 / DSM 2151 / CCUG 4856 / JCM 11019 / LMG 10263 / NCTC 9343 / Onslow / VPI 2553 / EN-2).